A 454-amino-acid chain; its full sequence is Bifunctional protein GlmU (454 aa).

A pyrophosphorylase region spans residues Met-1–Arg-226. Residues Leu-8–Gly-11, Lys-22, Gln-73, Gly-78–Thr-79, Tyr-100–Asp-102, Gly-137, Glu-151, Asn-166, and Asn-224 contribute to the UDP-N-acetyl-alpha-D-glucosamine site. Asp-102 lines the Mg(2+) pocket. Asn-224 contributes to the Mg(2+) binding site. A linker region spans residues Val-227–Glu-247. The interval Gly-248 to Lys-454 is N-acetyltransferase. Residues Arg-330 and Lys-348 each coordinate UDP-N-acetyl-alpha-D-glucosamine. His-360 functions as the Proton acceptor in the catalytic mechanism. The UDP-N-acetyl-alpha-D-glucosamine site is built by Tyr-363 and Asn-374. Acetyl-CoA is bound by residues Ala-377, Asn-383–Tyr-384, Ser-402, Ala-420, and Arg-437.

The protein in the N-terminal section; belongs to the N-acetylglucosamine-1-phosphate uridyltransferase family. This sequence in the C-terminal section; belongs to the transferase hexapeptide repeat family. As to quaternary structure, homotrimer. Requires Mg(2+) as cofactor.

It is found in the cytoplasm. It carries out the reaction alpha-D-glucosamine 1-phosphate + acetyl-CoA = N-acetyl-alpha-D-glucosamine 1-phosphate + CoA + H(+). It catalyses the reaction N-acetyl-alpha-D-glucosamine 1-phosphate + UTP + H(+) = UDP-N-acetyl-alpha-D-glucosamine + diphosphate. It participates in nucleotide-sugar biosynthesis; UDP-N-acetyl-alpha-D-glucosamine biosynthesis; N-acetyl-alpha-D-glucosamine 1-phosphate from alpha-D-glucosamine 6-phosphate (route II): step 2/2. Its pathway is nucleotide-sugar biosynthesis; UDP-N-acetyl-alpha-D-glucosamine biosynthesis; UDP-N-acetyl-alpha-D-glucosamine from N-acetyl-alpha-D-glucosamine 1-phosphate: step 1/1. The protein operates within bacterial outer membrane biogenesis; LPS lipid A biosynthesis. Functionally, catalyzes the last two sequential reactions in the de novo biosynthetic pathway for UDP-N-acetylglucosamine (UDP-GlcNAc). The C-terminal domain catalyzes the transfer of acetyl group from acetyl coenzyme A to glucosamine-1-phosphate (GlcN-1-P) to produce N-acetylglucosamine-1-phosphate (GlcNAc-1-P), which is converted into UDP-GlcNAc by the transfer of uridine 5-monophosphate (from uridine 5-triphosphate), a reaction catalyzed by the N-terminal domain. The chain is Bifunctional protein GlmU from Shewanella piezotolerans (strain WP3 / JCM 13877).